The following is a 176-amino-acid chain: Ribosome maturation factor RimM (176 aa).

Residues 99–176 (EDEYYWSDLV…RMVVDWERDF (78 aa)) enclose the PRC barrel domain.

Belongs to the RimM family. Binds ribosomal protein uS19.

It is found in the cytoplasm. Functionally, an accessory protein needed during the final step in the assembly of 30S ribosomal subunit, possibly for assembly of the head region. Essential for efficient processing of 16S rRNA. May be needed both before and after RbfA during the maturation of 16S rRNA. It has affinity for free ribosomal 30S subunits but not for 70S ribosomes. This Psychrobacter sp. (strain PRwf-1) protein is Ribosome maturation factor RimM.